A 159-amino-acid polypeptide reads, in one-letter code: Large ribosomal subunit protein uL15 (159 aa).

Positions Met-1–Gly-11 are enriched in basic and acidic residues. The disordered stretch occupies residues Met-1 to Ser-40. Gly residues predominate over residues Arg-21–Val-35.

The protein belongs to the universal ribosomal protein uL15 family. In terms of assembly, part of the 50S ribosomal subunit.

Its function is as follows. Binds to the 23S rRNA. The chain is Large ribosomal subunit protein uL15 from Paramagnetospirillum magneticum (strain ATCC 700264 / AMB-1) (Magnetospirillum magneticum).